The sequence spans 385 residues: Cytochrome b (385 aa).

The next 4 helical transmembrane spans lie at 34 to 54 (FGSL…LLTM), 78 to 99 (WFIR…FIHI), 114 to 134 (WYSG…GYVL), and 179 to 199 (FLVL…IHLV). The heme b site is built by histidine 84 and histidine 98. Heme b is bound by residues histidine 183 and histidine 197. Position 202 (histidine 202) interacts with a ubiquinone. 4 consecutive transmembrane segments (helical) span residues 227 to 247 (FKDI…SLLL), 289 to 309 (LAGI…PILI), 321 to 341 (LMQV…WLGA), and 348 to 368 (FILM…VMFP).

The protein belongs to the cytochrome b family. The cytochrome bc1 complex contains 3 respiratory subunits (MT-CYB, CYC1 and UQCRFS1), 2 core proteins (UQCRC1 and UQCRC2) and probably 6 low-molecular weight proteins. Heme b serves as cofactor.

It is found in the mitochondrion inner membrane. Its function is as follows. Component of the ubiquinol-cytochrome c reductase complex (complex III or cytochrome b-c1 complex) that is part of the mitochondrial respiratory chain. The b-c1 complex mediates electron transfer from ubiquinol to cytochrome c. Contributes to the generation of a proton gradient across the mitochondrial membrane that is then used for ATP synthesis. This chain is Cytochrome b (MT-CYB), found in Eptatretus burgeri (Inshore hagfish).